The sequence spans 186 residues: Cell division protein SepF (186 aa).

Positions 24 to 91 (EDEEEEERYA…HNPPHLRAVP (68 aa)) are disordered.

Belongs to the SepF family. In terms of assembly, homodimer. Interacts with FtsZ.

The protein localises to the cytoplasm. In terms of biological role, cell division protein that is part of the divisome complex and is recruited early to the Z-ring. Probably stimulates Z-ring formation, perhaps through the cross-linking of FtsZ protofilaments. Its function overlaps with FtsA. In Rubrobacter xylanophilus (strain DSM 9941 / JCM 11954 / NBRC 16129 / PRD-1), this protein is Cell division protein SepF.